A 517-amino-acid polypeptide reads, in one-letter code: MALSELALLRRLQESRHSRKLILFIVFLALLLDNMLLTVVVPIIPSYLYSIEHEKDALEIQTAKPGLTASAPGSFQNIFSYYDNSTMVTGNSTDHLQGALVHEATTQHMATNSSSASSDCPSEDKDLLNENVQVGLLFASKATVQLLTNPFIGLLTNRIGYPIPMFTGFCIMFISTVMFAFSRTYAFLLIARSLQGIGSSCSSVAGMGMLASVYTDDEERGNAMGIALGGLAMGVLVGPPFGSVLYEFVGKTAPFLVLAALVLLDGAIQLFVLQPSRVQPESQKGTPLTTLLRDPYILIAAGSICFANMGIAMLEPALPIWMMETMCSHKWQLGVAFLPASVSYLIGTNVFGILAHKMGRWLCALLGMIIVGMSILCIPLAKNIYGLIAPNFGVGFAIGMVDSSMMPIMGYLVDLRHVSVYGSVYAIADVAFCMGYAIGPSAGGAIAKAIGFPWLMTIIGIIDILFAPLCFFLRSPPAKEEKMAILMDHNCPIKTKMYTQNSSQSHPIGEDEESESD.

Residues 1-20 (MALSELALLRRLQESRHSRK) lie on the Cytoplasmic side of the membrane. The chain crosses the membrane as a helical span at residues 21 to 41 (LILFIVFLALLLDNMLLTVVV). Residues 42 to 132 (PIIPSYLYSI…EDKDLLNENV (91 aa)) are Extracellular-facing. 3 N-linked (GlcNAc...) asparagine glycosylation sites follow: Asn-84, Asn-91, and Asn-112. Cysteines 120 and 327 form a disulfide. A helical membrane pass occupies residues 133 to 153 (QVGLLFASKATVQLLTNPFIG). The Cytoplasmic segment spans residues 154–162 (LLTNRIGYP). Residues 163 to 183 (IPMFTGFCIMFISTVMFAFSR) traverse the membrane as a helical segment. Residues 184–192 (TYAFLLIAR) are Extracellular-facing. A helical membrane pass occupies residues 193–213 (SLQGIGSSCSSVAGMGMLASV). Residues 214-222 (YTDDEERGN) are Cytoplasmic-facing. A helical transmembrane segment spans residues 223–245 (AMGIALGGLAMGVLVGPPFGSVL). The serotonin site is built by Leu-231 and Val-235. Residues 246–251 (YEFVGK) lie on the Extracellular side of the membrane. A helical membrane pass occupies residues 252–274 (TAPFLVLAALVLLDGAIQLFVLQ). Topologically, residues 275–294 (PSRVQPESQKGTPLTTLLRD) are cytoplasmic. Residues 295-314 (PYILIAAGSICFANMGIAML) traverse the membrane as a helical segment. Asn-308, Ile-311, Glu-315, Phe-337, and Tyr-344 together coordinate serotonin. Topologically, residues 315 to 331 (EPALPIWMMETMCSHKW) are extracellular. Residues 332–355 (QLGVAFLPASVSYLIGTNVFGILA) form a helical membrane-spanning segment. Residues 356–360 (HKMGR) are Cytoplasmic-facing. The chain crosses the membrane as a helical span at residues 361 to 381 (WLCALLGMIIVGMSILCIPLA). The Extracellular portion of the chain corresponds to 382 to 392 (KNIYGLIAPNF). A helical transmembrane segment spans residues 393 to 413 (GVGFAIGMVDSSMMPIMGYLV). Serotonin is bound at residue Asp-402. The Cytoplasmic segment spans residues 414 to 417 (DLRH). Residues 418-438 (VSVYGSVYAIADVAFCMGYAI) traverse the membrane as a helical segment. Position 436 (Tyr-436) interacts with serotonin. Residues 439–443 (GPSAG) lie on the Extracellular side of the membrane. Residues 444-465 (GAIAKAIGFPWLMTIIGIIDIL) form a helical membrane-spanning segment. At 466–517 (FAPLCFFLRSPPAKEEKMAILMDHNCPIKTKMYTQNSSQSHPIGEDEESESD) the chain is on the cytoplasmic side. 2 positions are modified to phosphoserine; by CK2: Ser-514 and Ser-516.

The protein belongs to the major facilitator superfamily. Vesicular transporter family. As to quaternary structure, interacts with SLC6A3.

It is found in the cytoplasmic vesicle. It localises to the secretory vesicle. The protein resides in the synaptic vesicle membrane. The protein localises to the secretory vesicle membrane. Its subcellular location is the cell projection. It is found in the axon. It localises to the dendrite. The catalysed reaction is serotonin(in) + 2 H(+)(out) = serotonin(out) + 2 H(+)(in). The enzyme catalyses dopamine(in) + 2 H(+)(out) = dopamine(out) + 2 H(+)(in). It catalyses the reaction histamine(in) + 2 H(+)(out) = histamine(out) + 2 H(+)(in). With respect to regulation, strongly inhibited by reserpine and tetrabenazine. Also inhibited to a lesser extent by ketanserin and fenfluramine. Reserpine and ketanserin inhibit by blocking the substrate-binding pocket. Tetrabenazine traps SLC18A2/VMAT2 in an occluded conformation and its inhibition is specific to SLC18A2/VMAT2 but not SLC18A1/VMAT1. Electrogenic antiporter that exchanges one cationic monoamine with two intravesicular protons across the membrane of secretory and synaptic vesicles. Uses the electrochemical proton gradient established by the V-type proton-pump ATPase to accumulate high concentrations of monoamines inside the vesicles prior to their release via exocytosis. Transports a variety of catecholamines such as dopamine, adrenaline and noradrenaline, histamine, and indolamines such as serotonin. Regulates the transvesicular monoaminergic gradient that determines the quantal size. Mediates somatodendritic dopamine release in hippocampal neurons, likely as part of a regulated secretory pathway that integrates retrograde synaptic signals. Acts as a primary transporter for striatal dopamine loading ensuring impulse-dependent release of dopamine at the synaptic cleft. Responsible for histamine and serotonin storage and subsequent corelease from mast cell granules. This chain is Synaptic vesicular amine transporter (SLC18A2), found in Bos taurus (Bovine).